The following is a 178-amino-acid chain: Histone deacetylase complex subunit SAP30L (178 aa).

2 disulfide bridges follow: C24/C25 and C33/C69. The Atypical zinc-finger motif lies at 24-72 (CCLIEDAERCGRPAGNASFSKRIQKSISQRKLKLDIDKSVRHLYICDFH). Residues 80–99 (RNKRKRKTSDDGGESPDHEV) are disordered. Positions 81-86 (NKRKRK) match the Nuclear localization signal (NLS) motif. Residues 83 to 85 (RKR) are important for DNA and phosphoinositide binding.

Belongs to the SAP30 family. Interacts with components of the histone deacetylase complex sin3a, hdac1 and hdac2. Binds histones and nucleosomes. In terms of tissue distribution, detected in embryos at 2dpf (at protein level). Widely expressed during embryogenesis and in adults.

The protein resides in the nucleus. It localises to the nucleolus. Functions as a transcription repressor, probably via its interaction with histone deacetylase complexes. Required for normal expression of numerous target genes. Involved in the functional recruitment of the class 1 Sin3-histone deacetylase complex (HDAC) to the nucleolus. Binds DNA, apparently without sequence-specificity, and bends bound double-stranded DNA. Binds phosphoinositol phosphates (phosphoinositol 3-phosphate, phosphoinositol 4-phosphate and phosphoinositol 5-phosphate) via the same basic sequence motif that mediates DNA binding and nuclear import. The sequence is that of Histone deacetylase complex subunit SAP30L (sap30l) from Danio rerio (Zebrafish).